Here is a 462-residue protein sequence, read N- to C-terminus: Trigger factor (462 aa).

The 97-residue stretch at 163-259 folds into the PPIase FKBP-type domain; the sequence is TDYVNIDLQR…VNDVKRRDLP (97 aa). A disordered region spans residues 439–462; sequence SREEFEEEMQQQQQQQAQRQRMAP. Positions 448-462 are enriched in low complexity; that stretch reads QQQQQQQAQRQRMAP.

This sequence belongs to the FKBP-type PPIase family. Tig subfamily.

Its subcellular location is the cytoplasm. The catalysed reaction is [protein]-peptidylproline (omega=180) = [protein]-peptidylproline (omega=0). Involved in protein export. Acts as a chaperone by maintaining the newly synthesized protein in an open conformation. Functions as a peptidyl-prolyl cis-trans isomerase. In Salinibacter ruber (strain DSM 13855 / M31), this protein is Trigger factor.